A 254-amino-acid chain; its full sequence is rRNA N-glycosylase sapovaccarin-S2 (254 aa).

This sequence belongs to the ribosome-inactivating protein family. Type 1 RIP subfamily. Expressed in seeds; most abundant in the perisperm.

It catalyses the reaction Endohydrolysis of the N-glycosidic bond at one specific adenosine on the 28S rRNA.. Functionally, exhibits N-glycosylase activity. Catalyzes the release of one adenine from a ribosome. Acts as a ribosome-inactivating protein and inhibits protein synthesis. Induces cell death in Huh-7 liver cells. May contribute to the protection against plant pests and predators or play a role in regulating the death of plant cells. In Gypsophila vaccaria (Cow soapwort), this protein is rRNA N-glycosylase sapovaccarin-S2.